We begin with the raw amino-acid sequence, 114 residues long: Large ribosomal subunit protein bL19 (114 aa).

It belongs to the bacterial ribosomal protein bL19 family.

Functionally, this protein is located at the 30S-50S ribosomal subunit interface and may play a role in the structure and function of the aminoacyl-tRNA binding site. The chain is Large ribosomal subunit protein bL19 from Clostridium botulinum (strain Loch Maree / Type A3).